We begin with the raw amino-acid sequence, 390 residues long: MTPFHHPWGELCLQRWPRRRNETLQAWDNADLYLLNTLAERGQALGNGDNAPKTLVLNDQQGALCLALQQAAASALDIESSGDSYTAAAAARANAVDNGLDPNLLFCWPLDAPKQSPDQVIMRVPKSIALLQWQLQWLSGHLPKGVPIWLAGMDKHLPRQLVPLMQRYLGNGRAEYGWKKARLFSAQAPGRVLADTDYPCRVDALQWRLTVHAGVFAQQQLDIGARFFLDHLPEALHTGAKVADLGCGNGVIGMAVLKANPAARVTFCDESWLALESARDNVSRYFSDAESHFHLGDGLAGLEQRFDCILLNPPFHDGYVVGDHVARRLFNQAATALVPGGELRVIGNRHLGYHKVLARRFTSVTVLASNAKFVVWRCQGPTPSASNPLD.

Belongs to the methyltransferase superfamily. RlmG family.

Its subcellular location is the cytoplasm. It carries out the reaction guanosine(1835) in 23S rRNA + S-adenosyl-L-methionine = N(2)-methylguanosine(1835) in 23S rRNA + S-adenosyl-L-homocysteine + H(+). Functionally, specifically methylates the guanine in position 1835 (m2G1835) of 23S rRNA. In Alcanivorax borkumensis (strain ATCC 700651 / DSM 11573 / NCIMB 13689 / SK2), this protein is Ribosomal RNA large subunit methyltransferase G.